A 426-amino-acid chain; its full sequence is Serine hydroxymethyltransferase (426 aa).

Residues L121 and 125–127 (GHL) contribute to the (6S)-5,6,7,8-tetrahydrofolate site. K230 is subject to N6-(pyridoxal phosphate)lysine. (6S)-5,6,7,8-tetrahydrofolate is bound at residue 354 to 356 (SPF).

This sequence belongs to the SHMT family. As to quaternary structure, homodimer. Pyridoxal 5'-phosphate serves as cofactor.

The protein resides in the cytoplasm. The enzyme catalyses (6R)-5,10-methylene-5,6,7,8-tetrahydrofolate + glycine + H2O = (6S)-5,6,7,8-tetrahydrofolate + L-serine. The protein operates within one-carbon metabolism; tetrahydrofolate interconversion. It functions in the pathway amino-acid biosynthesis; glycine biosynthesis; glycine from L-serine: step 1/1. Catalyzes the reversible interconversion of serine and glycine with tetrahydrofolate (THF) serving as the one-carbon carrier. This reaction serves as the major source of one-carbon groups required for the biosynthesis of purines, thymidylate, methionine, and other important biomolecules. Also exhibits THF-independent aldolase activity toward beta-hydroxyamino acids, producing glycine and aldehydes, via a retro-aldol mechanism. In Acaryochloris marina (strain MBIC 11017), this protein is Serine hydroxymethyltransferase.